We begin with the raw amino-acid sequence, 446 residues long: tRNA-2-methylthio-N(6)-dimethylallyladenosine synthase (446 aa).

In terms of domain architecture, MTTase N-terminal spans 3–119 (KKIFIKTFGC…INEAILNHLK (117 aa)). Residues Cys-12, Cys-48, Cys-82, Cys-158, Cys-162, and Cys-165 each coordinate [4Fe-4S] cluster. Residues 144–374 (KDSKVSSFLT…QEKLFNNQIK (231 aa)) enclose the Radical SAM core domain. In terms of domain architecture, TRAM spans 377–439 (KSLENKILNV…QNSLFGKLTE (63 aa)).

Belongs to the methylthiotransferase family. MiaB subfamily. In terms of assembly, monomer. Requires [4Fe-4S] cluster as cofactor.

Its subcellular location is the cytoplasm. The enzyme catalyses N(6)-dimethylallyladenosine(37) in tRNA + (sulfur carrier)-SH + AH2 + 2 S-adenosyl-L-methionine = 2-methylsulfanyl-N(6)-dimethylallyladenosine(37) in tRNA + (sulfur carrier)-H + 5'-deoxyadenosine + L-methionine + A + S-adenosyl-L-homocysteine + 2 H(+). In terms of biological role, catalyzes the methylthiolation of N6-(dimethylallyl)adenosine (i(6)A), leading to the formation of 2-methylthio-N6-(dimethylallyl)adenosine (ms(2)i(6)A) at position 37 in tRNAs that read codons beginning with uridine. This chain is tRNA-2-methylthio-N(6)-dimethylallyladenosine synthase, found in Pelagibacter ubique (strain HTCC1062).